The chain runs to 634 residues: 1,4-alpha-glucan branching enzyme GlgB (634 aa).

Residue D305 is the Nucleophile of the active site. E357 serves as the catalytic Proton donor.

The protein belongs to the glycosyl hydrolase 13 family. GlgB subfamily. Monomer.

The enzyme catalyses Transfers a segment of a (1-&gt;4)-alpha-D-glucan chain to a primary hydroxy group in a similar glucan chain.. Its pathway is glycan biosynthesis; glycogen biosynthesis. Its function is as follows. Catalyzes the formation of the alpha-1,6-glucosidic linkages in glycogen by scission of a 1,4-alpha-linked oligosaccharide from growing alpha-1,4-glucan chains and the subsequent attachment of the oligosaccharide to the alpha-1,6 position. The polypeptide is 1,4-alpha-glucan branching enzyme GlgB (Lactiplantibacillus plantarum (strain ATCC BAA-793 / NCIMB 8826 / WCFS1) (Lactobacillus plantarum)).